We begin with the raw amino-acid sequence, 228 residues long: PKHD-type hydroxylase XCV3086 (228 aa).

Residues 78–180 (RIYPPLFNRY…RVACFFWTQS (103 aa)) form the Fe2OG dioxygenase domain. Residues histidine 96, aspartate 98, and histidine 161 each coordinate Fe cation. Position 171 (arginine 171) interacts with 2-oxoglutarate.

Requires Fe(2+) as cofactor. It depends on L-ascorbate as a cofactor.

This is PKHD-type hydroxylase XCV3086 from Xanthomonas euvesicatoria pv. vesicatoria (strain 85-10) (Xanthomonas campestris pv. vesicatoria).